We begin with the raw amino-acid sequence, 906 residues long: Ectonucleotide pyrophosphatase/phosphodiesterase family member 1 (906 aa).

The disordered stretch occupies residues 1-22 (MERDGDQAGHGPRHGSAGNGRE). Over 1–58 (MERDGDQAGHGPRHGSAGNGRELESPAAASLLAPMDLGEEPLEKAERARPAKDPNTYK) the chain is Cytoplasmic. Phosphoserine is present on Ser-25. The short motif at 27-34 (AAASLLAP) is the Di-leucine motif element. Residues 59 to 79 (VLSLVLSVCVLTTILGCIFGL) form a helical; Signal-anchor for type II membrane protein membrane-spanning segment. Residues 80–906 (KPSCAKEVKS…THLPIFSQED (827 aa)) are Extracellular-facing. 2 SMB domains span residues 86–126 (EVKS…VEPT) and 127–171 (HIWT…DKKS). Cystine bridges form between Cys-90/Cys-104, Cys-94/Cys-122, Cys-102/Cys-115, Cys-108/Cys-114, Cys-131/Cys-148, Cys-136/Cys-166, Cys-146/Cys-159, Cys-152/Cys-158, Cys-177/Cys-223, and Cys-185/Cys-397. Asn-161 carries N-linked (GlcNAc...) asparagine glycosylation. A phosphodiesterase region spans residues 173–573 (VEETCESIDT…APNNGSHGSL (401 aa)). 3 residues coordinate AMP: Asp-200, Thr-238, and Asn-259. 2 residues coordinate Zn(2+): Asp-200 and Thr-238. Thr-238 serves as the catalytic AMP-threonine intermediate. Positions 238 and 259 each coordinate CMP. 2 residues coordinate dTMP: Thr-238 and Asn-259. GMP is bound by residues Thr-238 and Asn-259. Thr-238 carries the post-translational modification Phosphothreonine. The N-linked (GlcNAc...) asparagine glycan is linked to Asn-267. Residues Leu-272, Lys-277, and Tyr-322 each coordinate GMP. AMP-binding residues include Lys-277 and Tyr-322. CMP contacts are provided by Lys-277 and Tyr-322. DTMP is bound at residue Tyr-322. Asn-323 carries N-linked (GlcNAc...) asparagine glycosylation. Residue Asp-358 participates in AMP binding. Zn(2+) contacts are provided by Asp-358, His-362, Asp-405, and His-406. A CMP-binding site is contributed by Asp-358. Asp-358 lines the dTMP pocket. Asp-358 is a GMP binding site. His-362 contributes to the 2',3'-cGAMP binding site. Residue His-406 coordinates AMP. His-406 provides a ligand contact to CMP. His-406 is a dTMP binding site. His-406 is a binding site for GMP. Intrachain disulfides connect Cys-413–Cys-512, Cys-462–Cys-849, Cys-596–Cys-653, Cys-607–Cys-707, Cys-609–Cys-692, and Cys-819–Cys-829. Asn-459 carries N-linked (GlcNAc...) asparagine glycosylation. Ser-514 is a 2',3'-cGAMP binding site. Residue His-517 participates in AMP binding. A Zn(2+)-binding site is contributed by His-517. His-517 is a CMP binding site. His-517 serves as a coordination point for dTMP. Position 517 (His-517) interacts with GMP. Asn-567 and Asn-624 each carry an N-linked (GlcNAc...) asparagine glycan. The interval 579–628 (KPIYNPSHPKEEGFLSQCPIKSTSNDLGCTCDPWIVPIKDFEKQLNLTTE) is linker. The segment at 635 to 906 (HMTVPYGRPR…THLPIFSQED (272 aa)) is nuclease-like domain. Positions 781, 783, 785, 787, and 789 each coordinate Ca(2+).

It belongs to the nucleotide pyrophosphatase/phosphodiesterase family. As to quaternary structure, ectonucleotide pyrophosphatase/phosphodiesterase family member 1: Homodimer. Ectonucleotide pyrophosphatase/phosphodiesterase family member 1: Interacts with INSR; leading to inhibit INSR autophosphorylation and subsequent activation of INSR kinase activity. Ectonucleotide pyrophosphatase/phosphodiesterase family member 1, secreted form: Monomeric. Requires Zn(2+) as cofactor. N-glycosylated. In terms of processing, the secreted form is produced through cleavage at Lys-85 by intracellular processing. Selectively expressed on the surface of antibody-secreting cells. Expressed in osteocytes and osteoclasts.

Its subcellular location is the cell membrane. It localises to the basolateral cell membrane. The protein localises to the secreted. The catalysed reaction is Hydrolytically removes 5'-nucleotides successively from the 3'-hydroxy termini of 3'-hydroxy-terminated oligonucleotides.. It catalyses the reaction a ribonucleoside 5'-triphosphate + H2O = a ribonucleoside 5'-phosphate + diphosphate + H(+). The enzyme catalyses ATP + H2O = AMP + diphosphate + H(+). It carries out the reaction UTP + H2O = UMP + diphosphate + H(+). The catalysed reaction is GTP + H2O = GMP + diphosphate + H(+). It catalyses the reaction CTP + H2O = CMP + diphosphate + H(+). The enzyme catalyses 2',3'-cGAMP + 2 H2O = GMP + AMP + 2 H(+). It carries out the reaction P(1),P(4)-bis(5'-adenosyl) tetraphosphate + H2O = AMP + ATP + 2 H(+). The catalysed reaction is 3',5'-cyclic AMP + H2O = AMP + H(+). Its activity is regulated as follows. At low concentrations of ATP, a phosphorylated intermediate is formed which inhibits further hydrolysis. In terms of biological role, nucleotide pyrophosphatase that generates diphosphate (PPi) and functions in bone mineralization and soft tissue calcification by regulating pyrophosphate levels. PPi inhibits bone mineralization and soft tissue calcification by binding to nascent hydroxyapatite crystals, thereby preventing further growth of these crystals. Preferentially hydrolyzes ATP, but can also hydrolyze other nucleoside 5' triphosphates such as GTP, CTP and UTP to their corresponding monophosphates with release of pyrophosphate, as well as diadenosine polyphosphates, and also 3',5'-cAMP to AMP. May also be involved in the regulation of the availability of nucleotide sugars in the endoplasmic reticulum and Golgi, and the regulation of purinergic signaling. Inhibits ectopic joint calcification and maintains articular chondrocytes by repressing hedgehog signaling; it is however unclear whether hedgehog inhibition is direct or indirect. Appears to modulate insulin sensitivity. Also involved in melanogenesis. Also able to hydrolyze 2',3'-cGAMP (cyclic GMP-AMP), a second messenger that activates TMEM173/STING and triggers type-I interferon production. 2',3'-cGAMP degradation takes place in the lumen or extracellular space, and not in the cytosol where it is produced; the role of 2',3'-cGAMP hydrolysis is therefore unclear. Not able to hydrolyze the 2',3'-cGAMP linkage isomer 3',3'-cGAMP. The polypeptide is Ectonucleotide pyrophosphatase/phosphodiesterase family member 1 (Mus musculus (Mouse)).